Reading from the N-terminus, the 282-residue chain is Acetyl-coenzyme A carboxylase carboxyl transferase subunit beta (282 aa).

Residues 29 to 282 (LWRTCPKCQR…LMKYGGKQND (254 aa)) enclose the CoA carboxyltransferase N-terminal domain. Zn(2+) contacts are provided by Cys-33, Cys-36, Cys-51, and Cys-54. The C4-type zinc finger occupies 33 to 54 (CPKCQRTLFAAQMDEYATCPGC).

This sequence belongs to the AccD/PCCB family. As to quaternary structure, acetyl-CoA carboxylase is a heterohexamer composed of biotin carboxyl carrier protein (AccB), biotin carboxylase (AccC) and two subunits each of ACCase subunit alpha (AccA) and ACCase subunit beta (AccD). Zn(2+) is required as a cofactor.

Its subcellular location is the cytoplasm. The enzyme catalyses N(6)-carboxybiotinyl-L-lysyl-[protein] + acetyl-CoA = N(6)-biotinyl-L-lysyl-[protein] + malonyl-CoA. It participates in lipid metabolism; malonyl-CoA biosynthesis; malonyl-CoA from acetyl-CoA: step 1/1. In terms of biological role, component of the acetyl coenzyme A carboxylase (ACC) complex. Biotin carboxylase (BC) catalyzes the carboxylation of biotin on its carrier protein (BCCP) and then the CO(2) group is transferred by the transcarboxylase to acetyl-CoA to form malonyl-CoA. In Limosilactobacillus fermentum (strain NBRC 3956 / LMG 18251) (Lactobacillus fermentum), this protein is Acetyl-coenzyme A carboxylase carboxyl transferase subunit beta.